The primary structure comprises 299 residues: Acarbose 7(IV)-phosphotransferase (299 aa).

This sequence belongs to the carbohydrate kinase PfkB family.

It carries out the reaction acarbose + ATP = acarbose 7(IV)-phosphate + ADP + H(+). Its function is as follows. Catalyzes the phosphorylation of the alpha-glucosidase inhibitor acarbose. Phosphorylation of acarbose could be a resistance-like self-protection mechanism. In Actinoplanes sp. (strain ATCC 31044 / CBS 674.73 / SE50/110), this protein is Acarbose 7(IV)-phosphotransferase.